Consider the following 66-residue polypeptide: Small ribosomal subunit protein eS30 (66 aa).

Residues 1–35 (MGKVHGGLNRAGKVRNATPKKDKEEKRKPKVGRAK) are disordered.

It belongs to the eukaryotic ribosomal protein eS30 family.

The chain is Small ribosomal subunit protein eS30 (rps30-1) from Dictyostelium discoideum (Social amoeba).